The primary structure comprises 266 residues: Endoplasmic reticulum vesicle protein 25 (266 aa).

Positions 1–26 are cleaved as a signal peptide; sequence MGSSPQSSTRTLLGLLFLLLVQLSSA. The Lumenal portion of the chain corresponds to 27-188; that stretch reads LKFDLHASSG…TNESTNERVK (162 aa). The region spanning 39–129 is the GOLD domain; it reads ERCIRNFVFK…YKSVELDVEI (91 aa). The helical transmembrane segment at 189 to 209 threads the bilayer; the sequence is WFAFGTMGMLVGLGVWQVVYL. The Cytoplasmic segment spans residues 210 to 266; the sequence is RAYFRYVDFPVSWRVDGVVANCCSCCEQVEASYLRSSRVVFWSPLVMWTRLSWLILR.

Belongs to the EMP24/GP25L family.

The protein localises to the endoplasmic reticulum membrane. Its subcellular location is the golgi apparatus membrane. In terms of biological role, constituent of COPII-coated endoplasmic reticulum-derived transport vesicles. Required for efficient transport of a subset of secretory proteins to the Golgi. Facilitates retrograde transport from the Golgi to the endoplasmic reticulum. This chain is Endoplasmic reticulum vesicle protein 25 (erv25), found in Aspergillus fumigatus (strain ATCC MYA-4609 / CBS 101355 / FGSC A1100 / Af293) (Neosartorya fumigata).